The primary structure comprises 204 residues: DNA-directed RNA polymerase III subunit RPC8 (204 aa).

The interval 158-178 (VDTSPTGPSSAEAASSSEELP) is disordered. Residues 166–175 (SSAEAASSSE) show a composition bias toward low complexity.

It belongs to the eukaryotic RPB7/RPC8 RNA polymerase subunit family. In terms of assembly, component of the RNA polymerase III complex consisting of 17 subunits: a ten-subunit horseshoe-shaped catalytic core composed of POLR3A/RPC1, POLR3B/RPC2, POLR1C/RPAC1, POLR1D/RPAC2, POLR3K/RPC10, POLR2E/RPABC1, POLR2F/RPABC2, POLR2H/RPABC3, POLR2K/RPABC4 and POLR2L/RPABC5; a mobile stalk composed of two subunits POLR3H/RPC8 and CRCP/RPC9, protruding from the core and functioning primarily in transcription initiation; and additional subunits homologous to general transcription factors of the RNA polymerase II machinery, POLR3C/RPC3-POLR3F/RPC6-POLR3G/RPC7 heterotrimer required for transcription initiation and POLR3D/RPC4-POLR3E/RPC5 heterodimer involved in both transcription initiation and termination. Interacts with CRCP/RPC9. POLR3H/RPC8 and CRCP/RPC9 probably form a Pol III subcomplex.

Its subcellular location is the nucleus. Its function is as follows. DNA-dependent RNA polymerase catalyzes the transcription of DNA into RNA using the four ribonucleoside triphosphates as substrates. Specific peripheric component of RNA polymerase III (Pol III) which synthesizes small non-coding RNAs including 5S rRNA, snRNAs, tRNAs and miRNAs from at least 500 distinct genomic loci. With CRCP/RPC9 forms a mobile stalk that protrudes from Pol III core and functions primarily in transcription initiation. Pol III plays a key role in sensing and limiting infection by intracellular bacteria and DNA viruses. Acts as nuclear and cytosolic DNA sensor involved in innate immune response. Can sense non-self dsDNA that serves as template for transcription into dsRNA. The non-self RNA polymerase III transcripts, such as Epstein-Barr virus-encoded RNAs (EBERs) induce type I interferon and NF-kappa-B through the RIG-I pathway. The protein is DNA-directed RNA polymerase III subunit RPC8 (POLR3H) of Bos taurus (Bovine).